Consider the following 539-residue polypeptide: Phosphoenolpyruvate carboxykinase (ATP) (539 aa).

Arginine 64, tyrosine 206, and lysine 212 together coordinate substrate. ATP contacts are provided by residues lysine 212, histidine 231, and glycine 247–threonine 255. Residues lysine 212 and histidine 231 each coordinate Mn(2+). Aspartate 268 is a Mn(2+) binding site. ATP-binding positions include glutamate 296, arginine 332, arginine 448–isoleucine 449, and threonine 454. Arginine 332 provides a ligand contact to substrate.

This sequence belongs to the phosphoenolpyruvate carboxykinase (ATP) family. In terms of assembly, monomer. Mn(2+) serves as cofactor.

The protein resides in the cytoplasm. The catalysed reaction is oxaloacetate + ATP = phosphoenolpyruvate + ADP + CO2. The protein operates within carbohydrate biosynthesis; gluconeogenesis. Functionally, involved in the gluconeogenesis. Catalyzes the conversion of oxaloacetate (OAA) to phosphoenolpyruvate (PEP) through direct phosphoryl transfer between the nucleoside triphosphate and OAA. This chain is Phosphoenolpyruvate carboxykinase (ATP), found in Edwardsiella ictaluri (strain 93-146).